The primary structure comprises 732 residues: Kell blood group glycoprotein (732 aa).

The segment at M1–E37 is disordered. Over M1–R47 the chain is Cytoplasmic. A Phosphoserine modification is found at S7. Residues V48–Y67 traverse the membrane as a helical; Signal-anchor for type II membrane protein segment. Residues N68–W732 lie on the Extracellular side of the membrane. Positions P76–W732 constitute a Peptidase M13 domain. The cysteines at positions 77 and 82 are disulfide-linked. N-linked (GlcNAc...) asparagine glycans are attached at residues N94 and N115. 4 disulfide bridges follow: C100/C717, C108/C682, C155/C410, and C610/C729. An N-linked (GlcNAc...) asparagine; in KEL2 antigen glycan is attached at N191. N-linked (GlcNAc...) asparagine glycosylation occurs at N345. H581 lines the Zn(2+) pocket. E582 is a catalytic residue. H585 lines the Zn(2+) pocket. N-linked (GlcNAc...) asparagine glycosylation occurs at N627. Zn(2+) is bound at residue E634. D638 serves as the catalytic Proton donor. The interval K684–G703 is disordered.

It belongs to the peptidase M13 family. Heterodimer with XK; disulfide-linked. It depends on Zn(2+) as a cofactor. Post-translationally, N-glycosylated. Expressed at high levels in erythrocytes and testis (in Sertoli cells), and, at lower levels, in skeletal muscle, tonsils (in follicular dendritic cells), lymph node, spleen and appendix (at protein level). Also expressed in many adult and fetal nonerythroid tissues, including brain, spleen, lymph nodes and bone marrow.

It is found in the cell membrane. Zinc endopeptidase with endothelin-3-converting enzyme activity. Cleaves EDN1, EDN2 and EDN3, with a marked preference for EDN3. The polypeptide is Kell blood group glycoprotein (KEL) (Homo sapiens (Human)).